Here is a 130-residue protein sequence, read N- to C-terminus: Small ribosomal subunit protein uS9 (130 aa).

Belongs to the universal ribosomal protein uS9 family.

The chain is Small ribosomal subunit protein uS9 from Buchnera aphidicola subsp. Acyrthosiphon pisum (strain Tuc7).